Consider the following 172-residue polypeptide: ATP synthase subunit b (172 aa).

A helical membrane pass occupies residues 5-24 (LLMLLLLGSVSLFANEAAAS).

This sequence belongs to the ATPase B chain family. F-type ATPases have 2 components, F(1) - the catalytic core - and F(0) - the membrane proton channel. F(1) has five subunits: alpha(3), beta(3), gamma(1), delta(1), epsilon(1). F(0) has three main subunits: a(1), b(2) and c(10-14). The alpha and beta chains form an alternating ring which encloses part of the gamma chain. F(1) is attached to F(0) by a central stalk formed by the gamma and epsilon chains, while a peripheral stalk is formed by the delta and b chains.

The protein localises to the cell inner membrane. Its function is as follows. F(1)F(0) ATP synthase produces ATP from ADP in the presence of a proton or sodium gradient. F-type ATPases consist of two structural domains, F(1) containing the extramembraneous catalytic core and F(0) containing the membrane proton channel, linked together by a central stalk and a peripheral stalk. During catalysis, ATP synthesis in the catalytic domain of F(1) is coupled via a rotary mechanism of the central stalk subunits to proton translocation. In terms of biological role, component of the F(0) channel, it forms part of the peripheral stalk, linking F(1) to F(0). The sequence is that of ATP synthase subunit b from Nitratiruptor sp. (strain SB155-2).